A 646-amino-acid polypeptide reads, in one-letter code: Wee1-like protein kinase (646 aa).

A disordered region spans residues 1–181; sequence MSFLSRQQPP…GTPPHKTFRK (181 aa). Residues 32–43 show a composition bias toward acidic residues; the sequence is DCEEEEEEEEEE. Residue Ser-53 is modified to Phosphoserine; by PLK1. Phosphoserine occurs at positions 78 and 85. Over residues 94-103 the composition is skewed to low complexity; the sequence is LLPGACPGAD. At Ser-123 the chain carries Phosphoserine; by CDK1. 5 positions are modified to phosphoserine: Ser-127, Ser-137, Ser-139, Ser-150, and Ser-165. Residues 158–170 are compositionally biased toward basic and acidic residues; that stretch reads RAGEGRRSPRPDH. Residues Thr-187, Thr-190, and Thr-239 each carry the phosphothreonine modification. A phosphoserine mark is found at Ser-270, Ser-307, and Ser-312. Residues 299–569 enclose the Protein kinase domain; that stretch reads FHELEKIGSG…AMALVKHSVL (271 aa). ATP contacts are provided by residues 305 to 313 and Lys-328; that span reads IGSGEFGSV. Asn-342 contributes to the Mg(2+) binding site. Asp-426 serves as the catalytic Proton acceptor. Asn-431, Asp-463, and Gly-465 together coordinate Mg(2+). Phosphoserine; by BRSK1 and BRSK2 is present on Ser-642.

Belongs to the protein kinase superfamily. Ser/Thr protein kinase family. WEE1 subfamily. Mg(2+) is required as a cofactor. In terms of processing, phosphorylated during M and G1 phases. Also autophosphorylated. Phosphorylation at Ser-642 by BRSK1 and BRSK2 in post-mitotic neurons, leads to down-regulate WEE1 activity in polarized neurons. Phosphorylated at Ser-53 and Ser-123 by PLK1 and CDK1, respectively, generating an signal for degradation that can be recognized by the SCF(BTRC) complex, leading to its ubiquitination and degradation at the onset of G2/M phase. Dephosphorylated at Thr-239 by CTDP1. Dephosphorylated at Ser-53 and Ser-123 by the serine/threonine-protein phosphatase 2A preventing its ubiquitin-mediated degradation. Post-translationally, ubiquitinated and degraded at the onset of G2/M phase.

The protein resides in the nucleus. The enzyme catalyses L-tyrosyl-[protein] + ATP = O-phospho-L-tyrosyl-[protein] + ADP + H(+). Its activity is regulated as follows. Synthesis is increased during S and G2 phases, presumably by an increase in transcription; activity is decreased by phosphorylation during M phase. Protein levels fall in M phase as a result of decreased synthesis combined with degradation. Activity seems to be negatively regulated by phosphorylation upon entry into mitosis, although N-terminal phosphorylation might also regulate the protein stability via protection from proteolysis or might regulate the subcellular location. Functionally, acts as a negative regulator of entry into mitosis (G2 to M transition) by protecting the nucleus from cytoplasmically activated cyclin B1-complexed CDK1 before the onset of mitosis by mediating phosphorylation of CDK1 on 'Tyr-15'. Specifically phosphorylates and inactivates cyclin B1-complexed CDK1 reaching a maximum during G2 phase and a minimum as cells enter M phase. Phosphorylation of cyclin B1-CDK1 occurs exclusively on 'Tyr-15' and phosphorylation of monomeric CDK1 does not occur. Its activity increases during S and G2 phases and decreases at M phase when it is hyperphosphorylated. A correlated decrease in protein level occurs at M/G1 phase, probably due to its degradation. The chain is Wee1-like protein kinase from Homo sapiens (Human).